A 317-amino-acid chain; its full sequence is 4-hydroxy-3-methylbut-2-enyl diphosphate reductase (317 aa).

Residue Cys12 coordinates [4Fe-4S] cluster. Residues His41 and His74 each coordinate (2E)-4-hydroxy-3-methylbut-2-enyl diphosphate. 2 residues coordinate dimethylallyl diphosphate: His41 and His74. His41 and His74 together coordinate isopentenyl diphosphate. A [4Fe-4S] cluster-binding site is contributed by Cys96. His124 lines the (2E)-4-hydroxy-3-methylbut-2-enyl diphosphate pocket. A dimethylallyl diphosphate-binding site is contributed by His124. Isopentenyl diphosphate is bound at residue His124. The Proton donor role is filled by Glu126. Thr168 is a binding site for (2E)-4-hydroxy-3-methylbut-2-enyl diphosphate. Cys198 contacts [4Fe-4S] cluster. (2E)-4-hydroxy-3-methylbut-2-enyl diphosphate contacts are provided by Ser226, Ser227, Asn228, and Ser270. Positions 226, 227, 228, and 270 each coordinate dimethylallyl diphosphate. 4 residues coordinate isopentenyl diphosphate: Ser226, Ser227, Asn228, and Ser270.

It belongs to the IspH family. [4Fe-4S] cluster serves as cofactor.

It carries out the reaction isopentenyl diphosphate + 2 oxidized [2Fe-2S]-[ferredoxin] + H2O = (2E)-4-hydroxy-3-methylbut-2-enyl diphosphate + 2 reduced [2Fe-2S]-[ferredoxin] + 2 H(+). It catalyses the reaction dimethylallyl diphosphate + 2 oxidized [2Fe-2S]-[ferredoxin] + H2O = (2E)-4-hydroxy-3-methylbut-2-enyl diphosphate + 2 reduced [2Fe-2S]-[ferredoxin] + 2 H(+). It functions in the pathway isoprenoid biosynthesis; dimethylallyl diphosphate biosynthesis; dimethylallyl diphosphate from (2E)-4-hydroxy-3-methylbutenyl diphosphate: step 1/1. Its pathway is isoprenoid biosynthesis; isopentenyl diphosphate biosynthesis via DXP pathway; isopentenyl diphosphate from 1-deoxy-D-xylulose 5-phosphate: step 6/6. Functionally, catalyzes the conversion of 1-hydroxy-2-methyl-2-(E)-butenyl 4-diphosphate (HMBPP) into a mixture of isopentenyl diphosphate (IPP) and dimethylallyl diphosphate (DMAPP). Acts in the terminal step of the DOXP/MEP pathway for isoprenoid precursor biosynthesis. The sequence is that of 4-hydroxy-3-methylbut-2-enyl diphosphate reductase from Chromohalobacter salexigens (strain ATCC BAA-138 / DSM 3043 / CIP 106854 / NCIMB 13768 / 1H11).